Consider the following 958-residue polypeptide: Nuclear factor NF-kappa-B p100 subunit (958 aa).

An RHD domain is found at 40 to 230; that stretch reads LLMSYLSIIE…DPIHDSKSPG (191 aa). Residues 343–347 carry the Nuclear localization signal motif; sequence RKRRK. Disordered regions lie at residues 350–374 and 411–442; these read PTFN…SFGQ and CSAT…QTDS. The GRR stretch occupies residues 352–390; it reads FNNHFYGGGSPMGGAPPGSSFGQGGGSNINYQYTGMNSA. The segment covering 357–374 has biased composition (gly residues); that stretch reads YGGGSPMGGAPPGSSFGQ. A compositionally biased stretch (polar residues) spans 412 to 425; that stretch reads SATNSSEKNQQPSI. 6 ANK repeats span residues 500–529, 539–568, 572–603, 610–639, 644–674, and 678–707; these read NGDT…SIPN, LQQT…DPTI, YGNS…QKNL, HGLS…NVNS, SGKS…DINA, and GGNT…NVLS. Positions 705–766 are disordered; sequence VLSENDEPVN…SAEEMHRREQ (62 aa). Over residues 724–734 the composition is skewed to acidic residues; the sequence is SESDSDVQMDT. Positions 753 to 766 are enriched in basic and acidic residues; the sequence is ECEHSAEEMHRREQ. The Death domain maps to 815–901; the sequence is VNVLALETNT…EGVELLCKSE (87 aa). A compositionally biased stretch (basic and acidic residues) spans 904–916; sequence AKHHSPAESKNDS. Positions 904 to 958 are disordered; the sequence is AKHHSPAESKNDSAYESQSMEVDQSSGNLMDDSQKQTIPVSAAELCPTTEPTIGQ. Polar residues predominate over residues 917–931; it reads AYESQSMEVDQSSGN.

As to quaternary structure, active NF-kappa-B is a heterodimer of an about 52 kDa DNA-binding subunit and the weak DNA-binding subunit p65. Two heterodimers might form a labile tetramer. In terms of processing, while translation occurs, the particular unfolded structure after the GRR repeat promotes the generation of p52 making it an acceptable substrate for the proteasome. This process is known as cotranslational processing. The processed form is active and the unprocessed form acts as an inhibitor (I kappa B-like), being able to form cytosolic complexes with NF-kappa B, trapping it in the cytoplasm. Complete folding of the region downstream of the GRR repeat precludes processing. Constitutive processing is tightly suppressed by its C-terminal processing inhibitory domain, named PID, which contains the death domain. Expressed in spleen.

It is found in the nucleus. The protein resides in the cytoplasm. Appears to have dual functions such as cytoplasmic retention of attached NF-kappa-B proteins and generation of p52 by a cotranslational processing. The proteasome-mediated process ensures the production of both p52 and p100 and preserves their independent function. p52 binds to the kappa-B consensus sequence 5'-GGRNNYYCC-3', located in the enhancer region of genes involved in immune response and acute phase reactions. In concert with RELB, may play a role in the regulation of the circadian clock. In Xenopus laevis (African clawed frog), this protein is Nuclear factor NF-kappa-B p100 subunit (nfkb2).